The primary structure comprises 492 residues: PTS system N-acetylmuramic acid-specific EIIBC component (492 aa).

Residues 1 to 89 (MAKINQSVIA…NELLNSSTPT (89 aa)) enclose the PTS EIIB type-1 domain. Catalysis depends on Cys28, which acts as the Phosphocysteine intermediate; for EIIB activity. The region spanning 123–487 (TKFATIFTPL…KKIEVLKADV (365 aa)) is the PTS EIIC type-1 domain. The next 10 membrane-spanning stretches (helical) occupy residues 125–145 (FATIFTPLIPGFIAVGLLLGF), 167–187 (IIGYMKVFSKGMFSFLSILIG), 193–213 (AFGGSGINGAIIASLFVLSYN), 227–247 (FFGYSIDPRGNIIGVLIAAIL), 265–285 (MILTSAITLLIMGAIAFIFIM), 311–331 (ILAGLFLLAVMFGVHQGFVPV), 344–364 (LFPILAMAGGGQVGAALALYV), 378–398 (GAIIPGLLGIGEPLIYGVTLP), 403–423 (FITACLGGAAGGFFIGLIAYL), and 450–470 (IFVGMAVYAAGLVVAYISGFV).

It is found in the cell inner membrane. The enzyme catalyses N-acetyl-beta-D-muramate(out) + N(pros)-phospho-L-histidyl-[protein] = N-acetyl-beta-D-muramate 6-phosphate(in) + L-histidyl-[protein]. In terms of biological role, the phosphoenolpyruvate-dependent sugar phosphotransferase system (sugar PTS), a major carbohydrate active transport system, catalyzes the phosphorylation of incoming sugar substrates concomitantly with their translocation across the cell membrane. This system is involved in N-acetylmuramic acid (MurNAc) transport, yielding cytoplasmic MurNAc-6-P. Is also able to take up anhydro-N-acetylmuramic acid (anhMurNAc), but cannot phosphorylate the carbon 6, probably because of the 1,6-anhydro ring. The sequence is that of PTS system N-acetylmuramic acid-specific EIIBC component (murP) from Photorhabdus laumondii subsp. laumondii (strain DSM 15139 / CIP 105565 / TT01) (Photorhabdus luminescens subsp. laumondii).